Consider the following 83-residue polypeptide: EMBRYO SURROUNDING FACTOR 1.1 (83 aa).

Residues Met1 to Cys22 form the signal peptide. Cystine bridges form between Cys41–Cys56, Cys46–Cys75, Cys54–Cys71, and Cys57–Cys64.

This sequence belongs to the MEG family. Expressed exclusively in ovule embryo sacs and in early developing endosperms.

In terms of biological role, maternally-contributed central cell peptide regulating suspensor development and correct auxin distribution in early developing embryos. The chain is EMBRYO SURROUNDING FACTOR 1.1 (ESF1.1) from Arabidopsis thaliana (Mouse-ear cress).